A 474-amino-acid polypeptide reads, in one-letter code: Protein CyaE (474 aa).

An N-terminal signal peptide occupies residues 1-31 (MAAVQVRRRGRALALALWAGFALSVGGGVRA).

It belongs to the outer membrane factor (OMF) (TC 1.B.17) family.

The protein localises to the cell outer membrane. CyaE is necessary for transport of calmodulin-sensitive adenylate cyclase-hemolysin (cyclolysin). In Bordetella pertussis (strain Tohama I / ATCC BAA-589 / NCTC 13251), this protein is Protein CyaE (cyaE).